Consider the following 456-residue polypeptide: Peptide chain release factor PrfB1, chloroplastic (456 aa).

A chloroplast-targeting transit peptide spans Met1–Phe58.

Belongs to the prokaryotic/mitochondrial release factor family. Expressed in leaves, stems and flowers.

The protein localises to the plastid. The protein resides in the chloroplast stroma. Functionally, directs the termination of translation in response to the peptide chain termination codon UGA. Required for the proper translation, stability and normal processing of UGA-containing polycistronic transcripts in chloroplasts. This chain is Peptide chain release factor PrfB1, chloroplastic, found in Arabidopsis thaliana (Mouse-ear cress).